Consider the following 105-residue polypeptide: Large ribosomal subunit protein uL24 (105 aa).

The protein belongs to the universal ribosomal protein uL24 family. Part of the 50S ribosomal subunit.

In terms of biological role, one of two assembly initiator proteins, it binds directly to the 5'-end of the 23S rRNA, where it nucleates assembly of the 50S subunit. Its function is as follows. One of the proteins that surrounds the polypeptide exit tunnel on the outside of the subunit. The chain is Large ribosomal subunit protein uL24 from Sorangium cellulosum (strain So ce56) (Polyangium cellulosum (strain So ce56)).